The primary structure comprises 766 residues: MGNDERKRPTKKMKYGGKDDQKMKNIQNVEDYYDDADEDSRDGEGEEKRRDFTDLELKPDHGNRPLWACADGKIFLETFSPLYKQAYDFLIAIAEPVCRPESMHEYNLTPHSLYAAVSVGLETETIISVLNKLSKTKLPGEIIDFIHASTANYGKVKLVLKKNRYFIESPFPEVLKRLLSDDVINRARFTSEPYYGGDGFTIGKTSGELEAGPGELLNEAELAAAAEEKETHSFEIDPALVENVKQRCLPNALNYPMLEEYDFRNDNVNPDLDMELKPHAQPRPYQEKSLSKMFGNGRARSGIIVLPCGAGKSLVGVSAAARIKKSCLCLATNAVSVDQWAYQFKLWSTIKDDQICRFTSDSKERFRGNAGVVVTTYNMIAFGGKRSEEAEKIIEEMRNREWGLLLMDEVHVVPAHMFRKVISITKSHCKLGLTATLVREDEKITDLNFLIGPKLYEANWLDLVKGGFIANVQCAEVWCPMTKEFFAEYLKKENSKKKQALYVMNPNKFRACEFLIRFHEQQRGDKIIVFADNLFALTEYAMKLRKPMIYGATSHIERTKILEAFKTSKTVNTVFLSKVGDNSIDIPEANVIIQISSHAGSRRQEAQRLGRILRAKGKLEDRMAGGKEEYNAFFYSLVSTDTQEMYYSTKRQQFLIDQGYSFKVITSLPPPDAGSSLGYHSQEEQLSLLGKVLNAGDDMVGLEQLEEDTDGKALKTRRSMGSMSAMSGANGRVYMEYNSGRQKSGNQSKKPKDPTKRHNIFKKRYV.

The tract at residues 1 to 56 is disordered; the sequence is MGNDERKRPTKKMKYGGKDDQKMKNIQNVEDYYDDADEDSRDGEGEEKRRDFTDLE. Acidic residues predominate over residues 31 to 41; the sequence is DYYDDADEDSR. Basic and acidic residues predominate over residues 42–56; the sequence is DGEGEEKRRDFTDLE. The region spanning 293-455 is the Helicase ATP-binding domain; sequence MFGNGRARSG…DLNFLIGPKL (163 aa). 306-313 serves as a coordination point for ATP; that stretch reads LPCGAGKS. A DEVH box motif is present at residues 408–411; the sequence is DEVH. The 167-residue stretch at 510–676 folds into the Helicase C-terminal domain; the sequence is RACEFLIRFH…SLPPPDAGSS (167 aa). The span at 739–748 shows a compositional bias: polar residues; it reads SGRQKSGNQS. The tract at residues 739–766 is disordered; that stretch reads SGRQKSGNQSKKPKDPTKRHNIFKKRYV. The short motif at 749–765 is the Nuclear localization signal element; that stretch reads KKPKDPTKRHNIFKKRY. The span at 757–766 shows a compositional bias: basic residues; that stretch reads RHNIFKKRYV.

The protein belongs to the helicase family. RAD25/XPB subfamily. As to quaternary structure, component of the 7-subunit TFIIH core complex composed of XPB, XPD, TFB1/GTF2H1, GTF2H2/P44, TFB4/GTF2H3, TFB2/GTF2H4 and TFB5/GTF2H5, which is active in NER. The core complex associates with the 3-subunit CDK-activating kinase (CAK) module composed of CYCH1/cyclin H1, CDKD and MAT1/At4g30820 to form the 10-subunit holoenzyme (holo-TFIIH) active in transcription. In terms of tissue distribution, expressed ubiquitously.

The protein resides in the nucleus. It carries out the reaction Couples ATP hydrolysis with the unwinding of duplex DNA by translocating in the 3'-5' direction.. The enzyme catalyses ATP + H2O = ADP + phosphate + H(+). ATP-dependent 3'-5' DNA helicase/translocase; binds dsDNA rather than ssDNA, unzipping it in a translocase rather than classical helicase activity. Component of the general transcription and DNA repair factor IIH (TFIIH) core complex. When complexed to CDK-activating kinase (CAK), involved in RNA transcription by RNA polymerase II. The ATPase activity of XPB/ERCC3, but not its helicase activity, is required for DNA opening; it may wrap around the damaged DNA wedging it open, causing localized melting and twisting that allows XPD/ERCC2 helicase to anchor. The ATP-dependent helicase activity of XPB/ERCC3 may be required for promoter escape. Also involved in transcription-coupled nucleotide excision repair (NER) of damaged DNA. In NER, TFIIH acts by opening DNA around the lesion to allow the excision of the damaged oligonucleotide and its replacement by a new DNA fragment. The structure of the TFIIH transcription complex differs from the NER-TFIIH complex. Partially complements UV sensitivity of a yeast SSL2 mutation. The protein is General transcription and DNA repair factor IIH helicase/translocase subunit XPB2 (XPB2) of Arabidopsis thaliana (Mouse-ear cress).